A 237-amino-acid polypeptide reads, in one-letter code: Corrinoid adenosyltransferase MMAB (237 aa).

The N-terminal 26 residues, 1–26 (MAVWLFGGRLGLRGRLSACRLLCPRF), are a transit peptide targeting the mitochondrion. Residues 30-49 (GPQGGEDGDRLQPSSTAAKI) are disordered. Residues 54–57 (TKTG), 62–63 (SS), and Lys72 contribute to the ATP site. Ser128 bears the Phosphoserine mark. 184–188 (RRAER) contacts ATP. Lys205 is subject to N6-succinyllysine. Asn208 is an ATP binding site. Lys224 carries the N6-acetyllysine; alternate modification. Position 224 is an N6-succinyllysine; alternate (Lys224).

It belongs to the Cob(I)alamin adenosyltransferase family. In terms of assembly, homotrimer.

It localises to the mitochondrion. It carries out the reaction cob(I)alamin-[corrinoid adenosyltransferase] + ATP = apo-[corrinoid adenosyltransferase] + adenosylcob(III)alamin + triphosphate. In terms of biological role, converts cob(I)alamin to adenosylcobalamin (adenosylcob(III)alamin), a coenzyme for methylmalonyl-CoA mutase, therefore participates in the final step of the vitamin B12 conversion. Generates adenosylcobalamin (AdoCbl) and directly delivers the cofactor to MUT in a transfer that is stimulated by ATP-binding to MMAB and gated by MMAA. The protein is Corrinoid adenosyltransferase MMAB of Mus musculus (Mouse).